Consider the following 41-residue polypeptide: uncharacterized protein (41 aa).

Residues M1–P41 are disordered. Residues H17–P41 are compositionally biased toward basic and acidic residues.

This is an uncharacterized protein from Bacillus subtilis (strain 168).